The sequence spans 633 residues: Chaperone protein HtpG (633 aa).

An a; substrate-binding region spans residues 1 to 341 (MTAPHETMSF…SADLPLNVSR (341 aa)). The tract at residues 342–562 (ELLQESRDVK…EGDMSGYLQR (221 aa)) is b. Residues 563-633 (LLKQAGQKAP…YVQRVNKLLA (71 aa)) form a c region.

Belongs to the heat shock protein 90 family. In terms of assembly, homodimer.

It localises to the cytoplasm. Molecular chaperone. Has ATPase activity. This is Chaperone protein HtpG from Cupriavidus necator (strain ATCC 17699 / DSM 428 / KCTC 22496 / NCIMB 10442 / H16 / Stanier 337) (Ralstonia eutropha).